The following is a 346-amino-acid chain: Protein RecA (346 aa).

Residue 67 to 74 (GPESSGKT) coordinates ATP.

It belongs to the RecA family.

The protein resides in the cytoplasm. Functionally, can catalyze the hydrolysis of ATP in the presence of single-stranded DNA, the ATP-dependent uptake of single-stranded DNA by duplex DNA, and the ATP-dependent hybridization of homologous single-stranded DNAs. It interacts with LexA causing its activation and leading to its autocatalytic cleavage. The protein is Protein RecA of Mycobacterium marinum (strain ATCC BAA-535 / M).